The following is a 266-amino-acid chain: Tryptophan synthase alpha chain (266 aa).

Catalysis depends on proton acceptor residues E46 and D57.

This sequence belongs to the TrpA family. In terms of assembly, tetramer of two alpha and two beta chains.

The catalysed reaction is (1S,2R)-1-C-(indol-3-yl)glycerol 3-phosphate + L-serine = D-glyceraldehyde 3-phosphate + L-tryptophan + H2O. Its pathway is amino-acid biosynthesis; L-tryptophan biosynthesis; L-tryptophan from chorismate: step 5/5. The alpha subunit is responsible for the aldol cleavage of indoleglycerol phosphate to indole and glyceraldehyde 3-phosphate. The sequence is that of Tryptophan synthase alpha chain from Lacticaseibacillus casei (Lactobacillus casei).